Reading from the N-terminus, the 392-residue chain is NADH dehydrogenase-like protein YjlD (392 aa).

The protein belongs to the NADH dehydrogenase family. The cofactor is FAD.

This is NADH dehydrogenase-like protein YjlD (yjlD) from Bacillus subtilis (strain 168).